We begin with the raw amino-acid sequence, 711 residues long: Polyribonucleotide nucleotidyltransferase (711 aa).

2 residues coordinate Mg(2+): D486 and D492. In terms of domain architecture, KH spans P553–I612. The region spanning G622–K690 is the S1 motif domain. The tract at residues I689–E711 is disordered. Positions E694–E711 are enriched in low complexity.

This sequence belongs to the polyribonucleotide nucleotidyltransferase family. Component of the RNA degradosome, which is a multiprotein complex involved in RNA processing and mRNA degradation. Mg(2+) is required as a cofactor.

The protein resides in the cytoplasm. The catalysed reaction is RNA(n+1) + phosphate = RNA(n) + a ribonucleoside 5'-diphosphate. Functionally, involved in mRNA degradation. Catalyzes the phosphorolysis of single-stranded polyribonucleotides processively in the 3'- to 5'-direction. The protein is Polyribonucleotide nucleotidyltransferase of Shigella flexneri serotype 5b (strain 8401).